A 160-amino-acid polypeptide reads, in one-letter code: Large ribosomal subunit protein uL15 (160 aa).

A compositionally biased stretch (basic and acidic residues) spans 1-13 (MKLNELRDNEGAA). The tract at residues 1–51 (MKLNELRDNEGAARKKKRVARGPGSGKGKTAGRGIKGQKSRSGVALNGYEG) is disordered. The segment covering 23–35 (PGSGKGKTAGRGI) has biased composition (gly residues).

It belongs to the universal ribosomal protein uL15 family. As to quaternary structure, part of the 50S ribosomal subunit.

Functionally, binds to the 23S rRNA. The polypeptide is Large ribosomal subunit protein uL15 (Cereibacter sphaeroides (strain ATCC 17025 / ATH 2.4.3) (Rhodobacter sphaeroides)).